A 336-amino-acid polypeptide reads, in one-letter code: tRNA N6-adenosine threonylcarbamoyltransferase (336 aa).

The Fe cation site is built by H111 and H115. Substrate is bound by residues 134 to 138 (LVSGG), D167, G180, and N270. D298 contacts Fe cation.

This sequence belongs to the KAE1 / TsaD family. Fe(2+) is required as a cofactor.

The protein resides in the cytoplasm. The catalysed reaction is L-threonylcarbamoyladenylate + adenosine(37) in tRNA = N(6)-L-threonylcarbamoyladenosine(37) in tRNA + AMP + H(+). Its function is as follows. Required for the formation of a threonylcarbamoyl group on adenosine at position 37 (t(6)A37) in tRNAs that read codons beginning with adenine. Is involved in the transfer of the threonylcarbamoyl moiety of threonylcarbamoyl-AMP (TC-AMP) to the N6 group of A37, together with TsaE and TsaB. TsaD likely plays a direct catalytic role in this reaction. The polypeptide is tRNA N6-adenosine threonylcarbamoyltransferase (Acinetobacter baumannii (strain AB307-0294)).